A 271-amino-acid chain; its full sequence is MGHMVDDLKMVDYYVGKGANGLELDVTFNSNGVAEYTFHGVPCDCFRSCTRYENINTYLDYVRQLTTPGDPKFQEKLIFLIMDLKLKNSPSSYAQFNAGINIADKLSQYYWKDDGKARAYFLISVPYVSQTAFIRGFQHRFEEKGLEKYYEKIGWDFSANEDLNSIRAAYQKLNITGHIWQSDGITNCLTRGDTRLKEAISKRDTPGWHINKVYTWSLDKVNSIKYALNLGVDGVMSNYAETLVTILSEDPFKQKFRLATYEDNPWETFKP.

Residue His3 is part of the active site. Mg(2+) contacts are provided by Glu23 and Asp25. Catalysis depends on His39, which acts as the Nucleophile. Disulfide bonds link Cys43–Cys49 and Cys45–Cys188. Mg(2+) is bound at residue Asp83.

It belongs to the arthropod phospholipase D family. Class II subfamily. Mg(2+) serves as cofactor. In terms of tissue distribution, expressed by the venom gland.

The protein resides in the secreted. The catalysed reaction is an N-(acyl)-sphingosylphosphocholine = an N-(acyl)-sphingosyl-1,3-cyclic phosphate + choline. The enzyme catalyses an N-(acyl)-sphingosylphosphoethanolamine = an N-(acyl)-sphingosyl-1,3-cyclic phosphate + ethanolamine. It carries out the reaction a 1-acyl-sn-glycero-3-phosphocholine = a 1-acyl-sn-glycero-2,3-cyclic phosphate + choline. It catalyses the reaction a 1-acyl-sn-glycero-3-phosphoethanolamine = a 1-acyl-sn-glycero-2,3-cyclic phosphate + ethanolamine. Dermonecrotic toxins cleave the phosphodiester linkage between the phosphate and headgroup of certain phospholipids (sphingolipid and lysolipid substrates), forming an alcohol (often choline) and a cyclic phosphate. This toxin acts on sphingomyelin (SM). It may also act on ceramide phosphoethanolamine (CPE), lysophosphatidylcholine (LPC) and lysophosphatidylethanolamine (LPE), but not on lysophosphatidylserine (LPS), and lysophosphatidylglycerol (LPG). It acts by transphosphatidylation, releasing exclusively cyclic phosphate products as second products. Induces dermonecrosis, hemolysis, increased vascular permeability, edema, inflammatory response, and platelet aggregation. The protein is Dermonecrotic toxin SpeSicTox-betaIF1 of Sicarius peruensis (Six-eyed sand spider).